The sequence spans 201 residues: Pyridoxal 5'-phosphate synthase subunit PdxT (201 aa).

50-52 (GES) is a binding site for L-glutamine. Residue C82 is the Nucleophile of the active site. Residues R111 and 139–140 (IR) each bind L-glutamine. Residues H180 and E182 each act as charge relay system in the active site.

Belongs to the glutaminase PdxT/SNO family. In the presence of PdxS, forms a dodecamer of heterodimers. Only shows activity in the heterodimer.

It catalyses the reaction aldehydo-D-ribose 5-phosphate + D-glyceraldehyde 3-phosphate + L-glutamine = pyridoxal 5'-phosphate + L-glutamate + phosphate + 3 H2O + H(+). The enzyme catalyses L-glutamine + H2O = L-glutamate + NH4(+). Its pathway is cofactor biosynthesis; pyridoxal 5'-phosphate biosynthesis. In terms of biological role, catalyzes the hydrolysis of glutamine to glutamate and ammonia as part of the biosynthesis of pyridoxal 5'-phosphate. The resulting ammonia molecule is channeled to the active site of PdxS. In Nocardioides sp. (strain ATCC BAA-499 / JS614), this protein is Pyridoxal 5'-phosphate synthase subunit PdxT.